Here is a 305-residue protein sequence, read N- to C-terminus: MILTAMQDAIGRTPIFKFTRKDYPIPLKSAIYAKLEHLNPGGSVKDRLGQYLIKEAFRTRKITSTTTIIEPTAGNTGIALALVAIKHHLKTIFVVPKKFSTEKQQIMRALGALVINTPTSEGISGAIKKSKELAESIPDSYLPLQFENPDNPAAYYHTLAPEIVQELGTNLTSFVAGIGSGGTFAGMAKYLKERIPNIRLIGVEPEGSILNGGEPGPHEIEGIGVEFIPPFFANLDIDRFETISDEEGFSYTRKLAKKNGLLVGSSSGAAFAAALKEVQRLPEGSQVLTIFPDMADRYLSKGIYS.

Lys45 carries the post-translational modification N6-(pyridoxal phosphate)lysine. Residues Asn75, 179–183, and Ser266 contribute to the pyridoxal 5'-phosphate site; that span reads GSGGT.

The protein belongs to the cysteine synthase/cystathionine beta-synthase family. Homodimer. Pyridoxal 5'-phosphate serves as cofactor.

It catalyses the reaction O-acetyl-L-serine + hydrogen sulfide = L-cysteine + acetate. It participates in amino-acid biosynthesis; L-cysteine biosynthesis; L-cysteine from L-serine: step 2/2. In Helicobacter pylori (strain J99 / ATCC 700824) (Campylobacter pylori J99), this protein is Cysteine synthase (cysM).